We begin with the raw amino-acid sequence, 133 residues long: Mitochondrial import inner membrane translocase subunit TIM17-3 (133 aa).

The next 4 membrane-spanning stretches (helical) occupy residues 15 to 35 (IVNAIGYAFGAGAVGGSVYHF), 63 to 83 (GGTFAVFGGLLSTFDYALVRI), 90 to 105 (WNSIVAGAATGGVLSI), and 115 to 128 (SAVMFGFFLAVLNP).

The protein belongs to the Tim17/Tim22/Tim23 family. As to quaternary structure, component of the TIM17:23 complex at least composed of TIM23, TIM17 and TIM50. The complex interacts with the TIM44 component of the PAM complex. Expressed in cotyledons, roots, flowers and leaves.

It localises to the mitochondrion inner membrane. Its function is as follows. Essential component of the TIM17:23 complex, a complex that mediates the translocation of transit peptide-containing proteins across the mitochondrial inner membrane. Links the inner and outer membranes. This Arabidopsis thaliana (Mouse-ear cress) protein is Mitochondrial import inner membrane translocase subunit TIM17-3 (TIM17-3).